The primary structure comprises 49 residues: DNA-directed RNA polymerase subunit Rpo12 (49 aa).

Positions 11, 27, and 30 each coordinate Zn(2+).

The protein belongs to the archaeal Rpo12/eukaryotic RPC10 RNA polymerase subunit family. As to quaternary structure, part of the RNA polymerase complex. Requires Zn(2+) as cofactor.

The protein resides in the cytoplasm. It carries out the reaction RNA(n) + a ribonucleoside 5'-triphosphate = RNA(n+1) + diphosphate. In terms of biological role, DNA-dependent RNA polymerase (RNAP) catalyzes the transcription of DNA into RNA using the four ribonucleoside triphosphates as substrates. The protein is DNA-directed RNA polymerase subunit Rpo12 of Pyrococcus horikoshii (strain ATCC 700860 / DSM 12428 / JCM 9974 / NBRC 100139 / OT-3).